A 448-amino-acid polypeptide reads, in one-letter code: MSEKAFVTVTALTKYIKRKFDVDPHLEDIWIKGELSNVKIHSRGHVYFTLKDENARMQAVMFQRSAAKLPFSPKSGMKVFVRGGIQVYEPSGNYQLYAKEMQPDGVGALHLAYEELKKKLASEGLFDARYKKPIPEYPEVVGVITSPTGAAVRDVITTINRRYQQAKIIVLPALVQGEHATRSIVERIKEANEKQLCDVLIVGRGGGSIEELWAFNEEAVARAIFASDIPIISAVGHETDFTISDFTADMRAPTPTGAAELAVPSTTDLIERIKSIDIRLTRAVKNQTSQAKDRLLALQSSYAFRFPKRLQEQKEQQFDLVFDRFQKQLTRQIEQKRSQLDRQTYRLKPLHPKEQLLQAKKRHANETEQLIRSMNVQMKTIHSQFQSVLGKLNALNPLQVMERGYSLAYKEDELIKSVNQVETKDQLTITMKDGRLICEVIEKEGQSS.

Belongs to the XseA family. In terms of assembly, heterooligomer composed of large and small subunits.

Its subcellular location is the cytoplasm. It catalyses the reaction Exonucleolytic cleavage in either 5'- to 3'- or 3'- to 5'-direction to yield nucleoside 5'-phosphates.. Its function is as follows. Bidirectionally degrades single-stranded DNA into large acid-insoluble oligonucleotides, which are then degraded further into small acid-soluble oligonucleotides. The polypeptide is Exodeoxyribonuclease 7 large subunit (Bacillus pumilus (strain SAFR-032)).